The following is a 323-amino-acid chain: Elongation factor P--(R)-beta-lysine ligase (323 aa).

A substrate-binding site is contributed by 76–78; it reads SPE. ATP is bound by residues 100 to 102 and Asn-109; that span reads RNE. Residue Tyr-118 coordinates substrate. ATP is bound at residue 242–243; sequence EL. Glu-249 contributes to the substrate binding site. An ATP-binding site is contributed by Gly-298.

This sequence belongs to the class-II aminoacyl-tRNA synthetase family. EpmA subfamily. In terms of assembly, homodimer.

The enzyme catalyses D-beta-lysine + L-lysyl-[protein] + ATP = N(6)-((3R)-3,6-diaminohexanoyl)-L-lysyl-[protein] + AMP + diphosphate + H(+). In terms of biological role, with EpmB is involved in the beta-lysylation step of the post-translational modification of translation elongation factor P (EF-P). Catalyzes the ATP-dependent activation of (R)-beta-lysine produced by EpmB, forming a lysyl-adenylate, from which the beta-lysyl moiety is then transferred to the epsilon-amino group of a conserved specific lysine residue in EF-P. The sequence is that of Elongation factor P--(R)-beta-lysine ligase from Histophilus somni (strain 129Pt) (Haemophilus somnus).